The following is a 618-amino-acid chain: Leucine aminopeptidase 2 (618 aa).

A peptide contacts are provided by residues 139–141 (QCQ) and 271–276 (PYGGME). His300 lines the Zn(2+) pocket. The active-site Proton acceptor is the Glu301. Zn(2+) contacts are provided by His304 and Glu323. Tyr388 (proton donor) is an active-site residue.

It belongs to the peptidase M1 family. It depends on Zn(2+) as a cofactor.

Its subcellular location is the cytoplasm. The protein localises to the nucleus. It carries out the reaction an epoxide + H2O = an ethanediol. In terms of biological role, aminopeptidase that preferentially cleaves di- and tripeptides. Also has low epoxide hydrolase activity (in vitro). Can hydrolyze the epoxide leukotriene LTA(4) but it forms preferentially 5,6-dihydroxy-7,9,11,14-eicosatetraenoic acid rather than the cytokine leukotriene B(4) as the product compared to the homologous mammalian enzyme (in vitro). This is Leucine aminopeptidase 2 from Aspergillus niger (strain ATCC MYA-4892 / CBS 513.88 / FGSC A1513).